A 166-amino-acid chain; its full sequence is Dynein regulatory complex protein 8 (166 aa).

In terms of domain architecture, EF-hand spans 95–130; sequence DDYHTLLRAFRAFDPDGRGFIDAESFKSLLTGKGEA.

This sequence belongs to the DRC8 family. Component of the nexin-dynein regulatory complex (N-DRC).

The protein resides in the cytoplasm. The protein localises to the cytoskeleton. Its subcellular location is the flagellum axoneme. Component of the nexin-dynein regulatory complex (N-DRC), a key regulator of ciliary/flagellar motility which maintains the alignment and integrity of the distal axoneme and regulates microtubule sliding in motile axonemes. This Chlamydomonas reinhardtii (Chlamydomonas smithii) protein is Dynein regulatory complex protein 8.